We begin with the raw amino-acid sequence, 369 residues long: Delta(14)-sterol reductase (369 aa).

The next 7 helical transmembrane spans lie at 15 to 34 (QSVY…GEIL), 54 to 76 (CNGL…LGIV), 86 to 105 (LELL…ALYV), 146 to 168 (FFFV…AKSV), 178 to 195 (ILYQ…FVHE), 208 to 230 (RLGF…IQGW), and 240 to 262 (TVPA…RGAN). NADP(+) is bound by residues K265, K269, L289, W294, and 301-302 (NY). The helical transmembrane segment at 275-297 (PIWGKPPVVVGGKLLVSGYWGIA) threads the bilayer. Residues 317–336 (GISSPVPYFYPIYLLILLIW) traverse the membrane as a helical segment. Residues D341, 345–349 (CAEKY), and Y356 contribute to the NADP(+) site.

Belongs to the ERG4/ERG24 family.

It is found in the membrane. The enzyme catalyses 4,4-dimethyl-5alpha-cholesta-8,24-dien-3beta-ol + NADP(+) = 4,4-dimethyl-5alpha-cholesta-8,14,24-trien-3beta-ol + NADPH + H(+). Its pathway is steroid biosynthesis; zymosterol biosynthesis; zymosterol from lanosterol: step 2/6. Functionally, reduces the C14=C15 double bond of 4,4-dimethyl-cholesta-8,14,24-trienol to produce 4,4-dimethyl-cholesta-8,24-dienol. Required for cell division and expansion and is involved in proper organization of the embryo. This chain is Delta(14)-sterol reductase (FK), found in Arabidopsis thaliana (Mouse-ear cress).